The sequence spans 297 residues: Ribonuclease HIII (297 aa).

In terms of domain architecture, RNase H type-2 spans 81–297; it reads IPIIGTDEVG…NTKKAQALLK (217 aa). A divalent metal cation contacts are provided by Asp87, Glu88, and Asp192.

This sequence belongs to the RNase HII family. RnhC subfamily. Requires Mn(2+) as cofactor. Mg(2+) serves as cofactor.

The protein localises to the cytoplasm. The catalysed reaction is Endonucleolytic cleavage to 5'-phosphomonoester.. In terms of biological role, endonuclease that specifically degrades the RNA of RNA-DNA hybrids. This is Ribonuclease HIII from Streptococcus agalactiae serotype Ia (strain ATCC 27591 / A909 / CDC SS700).